The primary structure comprises 311 residues: Probable cell division protein WhiA (311 aa).

The H-T-H motif DNA-binding region spans 277-311 (TLKEVADQIPDGPISKSGVNHRFKKLHEIAESLRE).

Belongs to the WhiA family.

Functionally, involved in cell division and chromosome segregation. In Lactobacillus acidophilus (strain ATCC 700396 / NCK56 / N2 / NCFM), this protein is Probable cell division protein WhiA.